A 312-amino-acid polypeptide reads, in one-letter code: R2-like ligand binding oxidase (312 aa).

3 residues coordinate Mn(2+): glutamate 68, glutamate 101, and histidine 104. The 3-(O4'-tyrosyl)-valine (Val-Tyr) cross-link spans 71–162 (VTQDIQPFMA…AAQVRASATY (92 aa)). Residue glutamate 101 participates in Fe cation binding. Residues glutamate 167, glutamate 202, and histidine 205 each coordinate Fe cation.

Belongs to the ribonucleoside diphosphate reductase small chain family. R2-like ligand binding oxidase subfamily. Homodimer. Fe cation serves as cofactor. It depends on Mn(2+) as a cofactor.

In terms of biological role, probable oxidase that might be involved in lipid metabolism. The sequence is that of R2-like ligand binding oxidase from Mycobacterium sp. (strain KMS).